Reading from the N-terminus, the 639-residue chain is Chaperone protein HtpG (639 aa).

The a; substrate-binding stretch occupies residues 1–347 (MSQQETHGFQ…SNDLPLNVSR (347 aa)). The interval 348 to 564 (EILQDNKVTT…EGEMSTQMIK (217 aa)) is b. Residues 565–639 (LMQAAGQDVP…MNQMLLASVK (75 aa)) form a c region.

The protein belongs to the heat shock protein 90 family. As to quaternary structure, homodimer.

It localises to the cytoplasm. Functionally, molecular chaperone. Has ATPase activity. This Shewanella halifaxensis (strain HAW-EB4) protein is Chaperone protein HtpG.